Here is a 1802-residue protein sequence, read N- to C-terminus: Transposon Ty4-H Gag-Pol polyprotein (1802 aa).

Residues 39 to 115 (RKVSIKDEQV…IQLLETNENN (77 aa)) are a coiled coil. Positions 381-501 (NNNLSPVQNE…KTKMVLSRKY (121 aa)) are ty4 protease. The active-site For protease activity; shared with dimeric partner is the Asp414. The integrase-type zinc finger-like stretch occupies residues 539-599 (AIKPTSSPGF…EPNEFWCQTC (61 aa)). Residues 619-786 (TDHEPGSSWC…LPLKAISRQP (168 aa)) enclose the Integrase catalytic domain. Residues Asp630 and Asp695 each contribute to the Mg(2+) site. The disordered stretch occupies residues 1223-1248 (KRKRKRHDKNNSLTSYELERDKKRSK). Positions 1375–1510 (RNMFMKTLDI…DILGMDLVYN (136 aa)) constitute a Reverse transcriptase Ty1/copia-type domain. Positions 1383, 1462, 1463, 1644, 1686, and 1720 each coordinate Mg(2+). The RNase H Ty1/copia-type domain occupies 1644 to 1790 (DASVGSEYDA…KRFIQVLKNK (147 aa)).

As to quaternary structure, the protease is a homodimer, whose active site consists of two apposed aspartic acid residues. In terms of processing, proteolytically processed into capsid protein (CA), Ty4 protease (PR), integrase (IN) and reverse transcriptase/ribonuclease H (RT) proteins. Initially, virus-like particles (VLPs) are composed of the structural unprocessed proteins Gag and Gag-Pol, and also contain the host initiator methionine tRNA (tRNA(i)-Met) which serves as a primer for minus-strand DNA synthesis, and a dimer of genomic Ty RNA. Processing of the polyproteins occurs within the particle and proceeds by an ordered pathway, called maturation. First, the protease (PR) is released by autocatalytic cleavage of the Gag-Pol polyprotein, and this cleavage is a prerequisite for subsequent processing at the remaining sites to release the mature structural and catalytic proteins. Maturation takes place prior to the RT reaction and is required to produce transposition-competent VLPs.

The protein resides in the cytoplasm. It localises to the nucleus. It carries out the reaction DNA(n) + a 2'-deoxyribonucleoside 5'-triphosphate = DNA(n+1) + diphosphate. It catalyses the reaction Endonucleolytic cleavage to 5'-phosphomonoester.. Functionally, capsid protein (CA) is the structural component of the virus-like particle (VLP), forming the shell that encapsulates the retrotransposons dimeric RNA genome. Its function is as follows. The aspartyl protease (PR) mediates the proteolytic cleavages of the Gag and Gag-Pol polyproteins after assembly of the VLP. Reverse transcriptase/ribonuclease H (RT) is a multifunctional enzyme that catalyzes the conversion of the retro-elements RNA genome into dsDNA within the VLP. The enzyme displays a DNA polymerase activity that can copy either DNA or RNA templates, and a ribonuclease H (RNase H) activity that cleaves the RNA strand of RNA-DNA heteroduplexes during plus-strand synthesis and hydrolyzes RNA primers. The conversion leads to a linear dsDNA copy of the retrotransposon that includes long terminal repeats (LTRs) at both ends. In terms of biological role, integrase (IN) targets the VLP to the nucleus, where a subparticle preintegration complex (PIC) containing at least integrase and the newly synthesized dsDNA copy of the retrotransposon must transit the nuclear membrane. Once in the nucleus, integrase performs the integration of the dsDNA into the host genome. In Saccharomyces cerevisiae (strain ATCC 204508 / S288c) (Baker's yeast), this protein is Transposon Ty4-H Gag-Pol polyprotein (TY4B-H).